Here is a 306-residue protein sequence, read N- to C-terminus: Aspartate carbamoyltransferase catalytic subunit (306 aa).

Residues Arg-55 and Thr-56 each contribute to the carbamoyl phosphate site. Lys-84 serves as a coordination point for L-aspartate. Arg-105, His-133, and Gln-136 together coordinate carbamoyl phosphate. 2 residues coordinate L-aspartate: Arg-166 and Arg-227. The carbamoyl phosphate site is built by Leu-265 and Pro-266.

It belongs to the aspartate/ornithine carbamoyltransferase superfamily. ATCase family. In terms of assembly, heterododecamer (2C3:3R2) of six catalytic PyrB chains organized as two trimers (C3), and six regulatory PyrI chains organized as three dimers (R2).

The catalysed reaction is carbamoyl phosphate + L-aspartate = N-carbamoyl-L-aspartate + phosphate + H(+). The protein operates within pyrimidine metabolism; UMP biosynthesis via de novo pathway; (S)-dihydroorotate from bicarbonate: step 2/3. Its function is as follows. Catalyzes the condensation of carbamoyl phosphate and aspartate to form carbamoyl aspartate and inorganic phosphate, the committed step in the de novo pyrimidine nucleotide biosynthesis pathway. The protein is Aspartate carbamoyltransferase catalytic subunit of Neisseria meningitidis serogroup C / serotype 2a (strain ATCC 700532 / DSM 15464 / FAM18).